The sequence spans 351 residues: Phosphate acyltransferase (351 aa).

This sequence belongs to the PlsX family. As to quaternary structure, homodimer. Probably interacts with PlsY.

The protein localises to the cytoplasm. The catalysed reaction is a fatty acyl-[ACP] + phosphate = an acyl phosphate + holo-[ACP]. The protein operates within lipid metabolism; phospholipid metabolism. Its function is as follows. Catalyzes the reversible formation of acyl-phosphate (acyl-PO(4)) from acyl-[acyl-carrier-protein] (acyl-ACP). This enzyme utilizes acyl-ACP as fatty acyl donor, but not acyl-CoA. The chain is Phosphate acyltransferase from Maricaulis maris (strain MCS10) (Caulobacter maris).